We begin with the raw amino-acid sequence, 350 residues long: Probable deoxyhypusine synthase (350 aa).

NAD(+) contacts are provided by residues 96–100, 122–124, Glu128, and Asp229; these read SNLIS and TAG. 127 to 128 contacts spermidine; the sequence is EE. Position 234 (Asp234) interacts with spermidine. Gly276 lines the NAD(+) pocket. Spermidine is bound at residue His281. An NAD(+)-binding site is contributed by 301-302; sequence SA. Spermidine contacts are provided by residues 307 to 309 and 316 to 322; these read GSD and EAVSWGK. Lys322 serves as the catalytic Nucleophile. 335–336 lines the NAD(+) pocket; that stretch reads EV.

It belongs to the deoxyhypusine synthase family. It depends on NAD(+) as a cofactor.

The enzyme catalyses [eIF5A protein]-L-lysine + spermidine = [eIF5A protein]-deoxyhypusine + propane-1,3-diamine. It participates in protein modification; eIF5A hypusination. Functionally, catalyzes the NAD-dependent oxidative cleavage of spermidine and the subsequent transfer of the butylamine moiety of spermidine to the epsilon-amino group of a specific lysine residue of the eIF-5A precursor protein to form the intermediate deoxyhypusine residue. This chain is Probable deoxyhypusine synthase, found in Schizosaccharomyces pombe (strain 972 / ATCC 24843) (Fission yeast).